The sequence spans 250 residues: MEEIKRLVLAMQFMTHLPIPIEIDVEKSEFYKIASYFPIVGIVIGGILSLFYIALKDFFSREIVMTFIVAFSYVLTGAMHIDGLADTFDGLFSNKDKSKMLEIMRDSRLGTNGVLALVFMVVLKILFLTNINENITLTALLITPIIGRLSIVFSMMITKSARGGEGLGGLMLGKVGIREFAIAFVISIATSYFILPLAVFVKILTISLFVTYIVSKYISLRIGGMTGDTLGAVNELAELTALICFVSVSL.

Transmembrane regions (helical) follow at residues isoleucine 33–isoleucine 53, isoleucine 63–glycine 83, leucine 109–threonine 129, leucine 137–isoleucine 157, phenylalanine 180–phenylalanine 200, and isoleucine 203–glycine 223.

It belongs to the CobS family. Mg(2+) is required as a cofactor.

Its subcellular location is the cell membrane. It carries out the reaction alpha-ribazole + adenosylcob(III)inamide-GDP = adenosylcob(III)alamin + GMP + H(+). The catalysed reaction is alpha-ribazole 5'-phosphate + adenosylcob(III)inamide-GDP = adenosylcob(III)alamin 5'-phosphate + GMP + H(+). Its pathway is cofactor biosynthesis; adenosylcobalamin biosynthesis; adenosylcobalamin from cob(II)yrinate a,c-diamide: step 7/7. Its function is as follows. Joins adenosylcobinamide-GDP and alpha-ribazole to generate adenosylcobalamin (Ado-cobalamin). Also synthesizes adenosylcobalamin 5'-phosphate from adenosylcobinamide-GDP and alpha-ribazole 5'-phosphate. The protein is Adenosylcobinamide-GDP ribazoletransferase of Thermoanaerobacter sp. (strain X514).